We begin with the raw amino-acid sequence, 599 residues long: Elongation factor 4 (599 aa).

The tr-type G domain occupies 5-187 (SHIRNFSIIA…HLVRVIPPPQ (183 aa)). GTP contacts are provided by residues 17–22 (DHGKST) and 134–137 (NKMD).

This sequence belongs to the TRAFAC class translation factor GTPase superfamily. Classic translation factor GTPase family. LepA subfamily.

It localises to the cell inner membrane. It catalyses the reaction GTP + H2O = GDP + phosphate + H(+). In terms of biological role, required for accurate and efficient protein synthesis under certain stress conditions. May act as a fidelity factor of the translation reaction, by catalyzing a one-codon backward translocation of tRNAs on improperly translocated ribosomes. Back-translocation proceeds from a post-translocation (POST) complex to a pre-translocation (PRE) complex, thus giving elongation factor G a second chance to translocate the tRNAs correctly. Binds to ribosomes in a GTP-dependent manner. This is Elongation factor 4 from Azotobacter vinelandii (strain DJ / ATCC BAA-1303).